The primary structure comprises 510 residues: Pheromone-processing carboxypeptidase kex1 (510 aa).

The signal sequence occupies residues 1-21 (MISKLLKIVLLTAGVIGNTLA). The Lumenal segment spans residues 22 to 468 (DSRIHEQYLV…SPDLGNGNYK (447 aa)). Asn51 and Asn104 each carry an N-linked (GlcNAc...) asparagine glycan. Residues Ser175 and Asp367 contribute to the active site. 2 N-linked (GlcNAc...) asparagine glycosylation sites follow: Asn392 and Asn416. Residue His427 is part of the active site. Residues 469-489 (WLYLGLIPVALTIIILFSIYL) traverse the membrane as a helical segment. Over 490–510 (CRRFGLFGLSKQRYQPISPTP) the chain is Cytoplasmic.

It belongs to the peptidase S10 family.

Its subcellular location is the golgi apparatus. It localises to the trans-Golgi network membrane. The protein localises to the vacuole membrane. The catalysed reaction is Preferential release of a C-terminal arginine or lysine residue.. Functionally, protease with a carboxypeptidase B-like function involved in the C-terminal processing of the lysine and arginine residues from protein precursors. Promotes cell fusion and is involved in the programmed cell death. This Schizosaccharomyces pombe (strain 972 / ATCC 24843) (Fission yeast) protein is Pheromone-processing carboxypeptidase kex1 (kex1).